The following is a 50-amino-acid chain: Thymosin beta-4 (50 aa).

The disordered stretch occupies residues methionine 1 to serine 50. At serine 8 the chain carries Phosphoserine. Residues aspartate 9–glutamate 31 are compositionally biased toward basic and acidic residues. Lysine 10 bears the N6-acetyllysine mark. Lysine 18 is modified (N6-acetyllysine; alternate). Lysine 18 participates in a covalent cross-link: Glycyl lysine isopeptide (Lys-Gly) (interchain with G-Cter in SUMO2); alternate. At threonine 29 the chain carries Phosphothreonine. Position 32 is an N6-acetyllysine (lysine 32). Phosphoserine is present on serine 37. Lysine 38 is modified (N6-acetyllysine). Residues glutamate 39–serine 50 are compositionally biased toward basic and acidic residues. Threonine 40 is modified (phosphothreonine). Lysine 45 bears the N6-acetyllysine mark.

This sequence belongs to the thymosin beta family. As to quaternary structure, identified in a complex composed of ACTA1, COBL, GSN AND TMSB4X. Interacts with SERPINB1. Post-translationally, acSDKP is inactivated by ACE, which removes the dipeptide Lys-Pro from its C-terminus. Originally found in thymus but it is widely distributed in many tissues.

The protein localises to the cytoplasm. It localises to the cytoskeleton. In terms of biological role, plays an important role in the organization of the cytoskeleton. Binds to and sequesters actin monomers (G actin) and therefore inhibits actin polymerization. Potent inhibitor of bone marrow derived stem cell differentiation. Acts by inhibits the entry of hematopoietic pluripotent stem cells into the S-phase. In Mus musculus (Mouse), this protein is Thymosin beta-4 (Tmsb4x).